Consider the following 463-residue polypeptide: tRNA modification GTPase MnmE (463 aa).

3 residues coordinate (6S)-5-formyl-5,6,7,8-tetrahydrofolate: arginine 26, glutamate 88, and arginine 127. Residues 224-383 form the TrmE-type G domain; the sequence is GLATAIIGRP…LEQRIAKMFF (160 aa). K(+) is bound at residue asparagine 234. GTP contacts are provided by residues 234–239, 253–259, and 278–281; these read NVGKSS, TDVAGTT, and DTAG. Serine 238 is a binding site for Mg(2+). The K(+) site is built by threonine 253, valine 255, and threonine 258. Threonine 259 serves as a coordination point for Mg(2+). Position 463 (lysine 463) interacts with (6S)-5-formyl-5,6,7,8-tetrahydrofolate.

This sequence belongs to the TRAFAC class TrmE-Era-EngA-EngB-Septin-like GTPase superfamily. TrmE GTPase family. In terms of assembly, homodimer. Heterotetramer of two MnmE and two MnmG subunits. The cofactor is K(+).

It localises to the cytoplasm. Its function is as follows. Exhibits a very high intrinsic GTPase hydrolysis rate. Involved in the addition of a carboxymethylaminomethyl (cmnm) group at the wobble position (U34) of certain tRNAs, forming tRNA-cmnm(5)s(2)U34. The chain is tRNA modification GTPase MnmE from Lactiplantibacillus plantarum (strain ATCC BAA-793 / NCIMB 8826 / WCFS1) (Lactobacillus plantarum).